Consider the following 277-residue polypeptide: Outer membrane lipoprotein 1 (277 aa).

Residues 1–19 (MSFKKILGVALVSALALTA) form the signal peptide. Cys20 is lipidated: N-palmitoyl cysteine. The S-diacylglycerol cysteine moiety is linked to residue Cys20.

The protein belongs to the NlpA lipoprotein family.

The protein resides in the cell outer membrane. The chain is Outer membrane lipoprotein 1 (plpA) from Mannheimia haemolytica (Pasteurella haemolytica).